Here is a 1072-residue protein sequence, read N- to C-terminus: Integrator complex subunit 3 homolog (1072 aa).

Disordered regions lie at residues 920–941 and 1002–1072; these read YPSS…STSI and DTTV…NDSD. A phosphoserine mark is found at Ser1042, Ser1043, Ser1047, and Ser1048.

The protein belongs to the Integrator subunit 3 family. As to quaternary structure, belongs to the multiprotein complex Integrator, at least composed of IntS1, IntS2, IntS3, IntS4, omd/IntS5, IntS6, defl/IntS7, IntS8, IntS9, IntS10, IntS11, IntS12, asun/IntS13, IntS14 and IntS15. The core complex associates with protein phosphatase 2A subunits mts/PP2A and Pp2A-29B, to form the Integrator-PP2A (INTAC) complex.

The protein localises to the nucleus. Its subcellular location is the cytoplasm. In terms of biological role, component of the integrator complex, a multiprotein complex that terminates RNA polymerase II (Pol II) transcription in the promoter-proximal region of genes. The integrator complex provides a quality checkpoint during transcription elongation by driving premature transcription termination of transcripts that are unfavorably configured for transcriptional elongation: the complex terminates transcription by (1) catalyzing dephosphorylation of the C-terminal domain (CTD) of Pol II subunit Polr2A/Rbp1 and Spt5, and (2) degrading the exiting nascent RNA transcript via endonuclease activity. The integrator complex is also involved in the 3'-end processing of the U7 snRNA, and also the spliceosomal snRNAs U1, U2, U4 and U5. The polypeptide is Integrator complex subunit 3 homolog (IntS3) (Drosophila erecta (Fruit fly)).